The following is a 427-amino-acid chain: Ribosomal protein uS12 methylthiotransferase RimO (427 aa).

Residues 1-116 (MNFYVDVLGC…IAENIGKESI (116 aa)) enclose the MTTase N-terminal domain. [4Fe-4S] cluster-binding residues include Cys-10, Cys-46, Cys-79, Cys-145, Cys-149, and Cys-152. The region spanning 131–360 (VDEKQYAYVK…MEEQSKISFE (230 aa)) is the Radical SAM core domain. Residues 363–426 (EKMVGKTFKV…VYDLEGKIVE (64 aa)) form the TRAM domain.

It belongs to the methylthiotransferase family. RimO subfamily. [4Fe-4S] cluster is required as a cofactor.

It localises to the cytoplasm. The catalysed reaction is L-aspartate(89)-[ribosomal protein uS12]-hydrogen + (sulfur carrier)-SH + AH2 + 2 S-adenosyl-L-methionine = 3-methylsulfanyl-L-aspartate(89)-[ribosomal protein uS12]-hydrogen + (sulfur carrier)-H + 5'-deoxyadenosine + L-methionine + A + S-adenosyl-L-homocysteine + 2 H(+). Functionally, catalyzes the methylthiolation of an aspartic acid residue of ribosomal protein uS12. This chain is Ribosomal protein uS12 methylthiotransferase RimO, found in Thermosipho africanus (strain TCF52B).